A 78-amino-acid polypeptide reads, in one-letter code: Putative membrane protein insertion efficiency factor (78 aa).

The protein belongs to the UPF0161 family.

The protein localises to the cell membrane. Functionally, could be involved in insertion of integral membrane proteins into the membrane. The polypeptide is Putative membrane protein insertion efficiency factor (Bacillus anthracis (strain A0248)).